The following is a 341-amino-acid chain: Protein quaking-A (341 aa).

One can recognise a KH domain in the interval Phe-87–Val-153. An SH3-binding motif is present at residues Pro-276 to Pro-279. Residues Arg-324–Arg-330 carry the Nuclear localization signal motif.

This sequence belongs to the quaking family. Homodimer; does not require RNA to homodimerize.

It localises to the cytoplasm. The protein resides in the nucleus. Its function is as follows. RNA reader protein, which recognizes and binds specific RNAs, thereby regulating RNA metabolic processes, such as pre-mRNA splicing, circular RNA (circRNA) formation, mRNA export, mRNA stability and/or translation. Involved in various cellular processes, such as mRNA storage into stress granules, apoptosis, interferon response, glial cell fate and development. Binds to the 5'-NACUAAY-N(1,20)-UAAY-3' RNA core sequence. Acts as a mRNA modification reader that specifically recognizes and binds mRNA transcripts modified by internal N(7)-methylguanine (m7G). Promotes the formation of circular RNAs (circRNAs): acts by binding to sites flanking circRNA-forming exons. CircRNAs are produced by back-splicing circularization of pre-mRNAs. Required to protect and promote stability of mRNAs which promotes oligodendrocyte differentiation. Acts as an important regulator of muscle development: required during early skeletal myofibril formation by regulating the accumulation of the muscle-specific tropomyosin-3 (tpm3) transcripts. The sequence is that of Protein quaking-A from Danio rerio (Zebrafish).